We begin with the raw amino-acid sequence, 475 residues long: uncharacterized protein (475 aa).

This is an uncharacterized protein from Acheta domesticus (House cricket).